Consider the following 89-residue polypeptide: Cell division topological specificity factor (89 aa).

It belongs to the MinE family.

Functionally, prevents the cell division inhibition by proteins MinC and MinD at internal division sites while permitting inhibition at polar sites. This ensures cell division at the proper site by restricting the formation of a division septum at the midpoint of the long axis of the cell. This Laribacter hongkongensis (strain HLHK9) protein is Cell division topological specificity factor.